Here is a 1072-residue protein sequence, read N- to C-terminus: Translation initiation factor IF-2 (1072 aa).

Disordered regions lie at residues 55–369 and 426–452; these read ILDK…TGTA and ELVD…VSKQ. 4 stretches are compositionally biased toward low complexity: residues 91–100, 108–118, 126–179, and 186–212; these read AEASQAAEPA, EPATFAAEEPV, APRA…AEVA, and EAPQ…PSVQ. The span at 218 to 230 shows a compositional bias: pro residues; that stretch reads PQPPPRSPVPPAV. Over residues 231 to 245 the composition is skewed to low complexity; it reads RTPSSTSSSATVVSR. Positions 253 to 307 are enriched in gly residues; that stretch reads QRGGPGGGRPGGPGGPGGRPGGPGGPGGRPGGPGGPGGRPGGPGGPGGRPGGPGG. Positions 426 to 436 are enriched in basic and acidic residues; that stretch reads ELVDVSKNKER. A tr-type G domain is found at 570-737; sequence PRPPVVAIMG…NLALQAEVLE (168 aa). The G1 stretch occupies residues 579 to 586; that stretch reads GHVDHGKT. 579-586 is a binding site for GTP; that stretch reads GHVDHGKT. A G2 region spans residues 604 to 608; it reads GITQH. Positions 625-628 are G3; it reads DTPG. Residues 625 to 629 and 679 to 682 each bind GTP; these read DTPGH and NKMD. Residues 679-682 form a G4 region; that stretch reads NKMD. Positions 715 to 717 are G5; sequence SAK.

It belongs to the TRAFAC class translation factor GTPase superfamily. Classic translation factor GTPase family. IF-2 subfamily.

The protein resides in the cytoplasm. One of the essential components for the initiation of protein synthesis. Protects formylmethionyl-tRNA from spontaneous hydrolysis and promotes its binding to the 30S ribosomal subunits. Also involved in the hydrolysis of GTP during the formation of the 70S ribosomal complex. The chain is Translation initiation factor IF-2 from Myxococcus xanthus (strain DK1622).